Consider the following 185-residue polypeptide: Protein GrpE (185 aa).

The span at 1 to 12 shows a compositional bias: basic and acidic residues; it reads MADEQLNEKDLN. The interval 1 to 22 is disordered; that stretch reads MADEQLNEKDLNVEETGAGNAA.

It belongs to the GrpE family. As to quaternary structure, homodimer.

The protein resides in the cytoplasm. Functionally, participates actively in the response to hyperosmotic and heat shock by preventing the aggregation of stress-denatured proteins, in association with DnaK and GrpE. It is the nucleotide exchange factor for DnaK and may function as a thermosensor. Unfolded proteins bind initially to DnaJ; upon interaction with the DnaJ-bound protein, DnaK hydrolyzes its bound ATP, resulting in the formation of a stable complex. GrpE releases ADP from DnaK; ATP binding to DnaK triggers the release of the substrate protein, thus completing the reaction cycle. Several rounds of ATP-dependent interactions between DnaJ, DnaK and GrpE are required for fully efficient folding. This Pseudomonas putida (strain ATCC 700007 / DSM 6899 / JCM 31910 / BCRC 17059 / LMG 24140 / F1) protein is Protein GrpE.